A 255-amino-acid polypeptide reads, in one-letter code: Electron transfer flavoprotein subunit beta (255 aa).

Residue alanine 2 is modified to N-acetylalanine. Residues alanine 9, 39–42, cysteine 66, and 123–134 each bind AMP; these read NPFC and GKQAIDDDCNQT. A recognition loop region spans residues 183–205; that stretch reads ADLRLNEPRYATLPNIMKAKKKK. Position 200 is an N6,N6,N6-trimethyllysine; by ETFBKMT; alternate (lysine 200). The residue at position 200 (lysine 200) is an N6-acetyllysine; alternate. Lysine 200 bears the N6-methyllysine; alternate mark. The residue at position 203 (lysine 203) is an N6,N6,N6-trimethyllysine; by ETFBKMT. Lysine 210 bears the N6-acetyllysine; alternate mark. N6-succinyllysine; alternate is present on lysine 210. A phosphoserine mark is found at serine 223 and serine 226. Lysine 238 carries the N6-acetyllysine modification. N6-acetyllysine; alternate is present on lysine 248. Lysine 248 is modified (N6-succinyllysine; alternate).

This sequence belongs to the ETF beta-subunit/FixA family. Heterodimer composed of ETFA and ETFB. Identified in a complex that contains ETFA, ETFB and ETFRF1. Interacts with ACADM. Post-translationally, methylated. Trimethylation at Lys-200 and Lys-203 may negatively regulate the activity in electron transfer from acyl-CoA dehydrogenases.

Its subcellular location is the mitochondrion matrix. Functionally, heterodimeric electron transfer flavoprotein that accepts electrons from several mitochondrial dehydrogenases, including acyl-CoA dehydrogenases, glutaryl-CoA and sarcosine dehydrogenase. It transfers the electrons to the main mitochondrial respiratory chain via ETF-ubiquinone oxidoreductase. Required for normal mitochondrial fatty acid oxidation and normal amino acid metabolism. ETFB binds an AMP molecule that probably has a purely structural role. The chain is Electron transfer flavoprotein subunit beta from Sus scrofa (Pig).